Consider the following 169-residue polypeptide: 4-hydroxylaminobenzoate lyase (169 aa).

The protein belongs to the PnbB family.

It carries out the reaction 4-hydroxylaminobenzoate + H2O + H(+) = 3,4-dihydroxybenzoate + NH4(+). Lyase involved in the degradation of nitroaromatic compounds. Catalyzes the conversion of 4-hydroxylaminobenzoate to 3,4-dihydroxybenzoate (protocatechuate). The chain is 4-hydroxylaminobenzoate lyase from Nocardioides sp. (strain LMS-CY).